The sequence spans 150 residues: Large ribosomal subunit protein bL9 (150 aa).

The protein belongs to the bacterial ribosomal protein bL9 family.

Its function is as follows. Binds to the 23S rRNA. The protein is Large ribosomal subunit protein bL9 of Vibrio parahaemolyticus serotype O3:K6 (strain RIMD 2210633).